The following is a 201-amino-acid chain: uncharacterized protein (201 aa).

The helical transmembrane segment at 11–31 (IIILTIMILTIIIFTRTINGL) threads the bilayer.

The protein resides in the membrane. This is an uncharacterized protein from Acanthamoeba polyphaga mimivirus (APMV).